Consider the following 245-residue polypeptide: MASLARRPPLLVPAVARHTATVIFIHGLGDTGHGWASAVEQWRRRQRLDEVKFILPHAPSIPITANWGMKMPGWYDIFAIDGSAEALRRNEDEAGILTSQAYFHDLIQKEIDSGIPADRIVIGGFSQGGAMGLFSGLTAKCKLAGIIALSSYLLLSLKFAELVPKPEFNKETPIFMAHGDADPVVNYKLGTMTRDLLKEMGYNVKFTTYPGMGHSACLEELDAIEDFLTERLPKVADKSEQKSEL.

Residues S126, D182, and H214 each act as charge relay system in the active site.

This sequence belongs to the AB hydrolase superfamily. AB hydrolase 2 family.

Its subcellular location is the cytoplasm. The protein localises to the nucleus. The enzyme catalyses S-hexadecanoyl-L-cysteinyl-[protein] + H2O = L-cysteinyl-[protein] + hexadecanoate + H(+). Hydrolyzes fatty acids from S-acylated cysteine residues in proteins with a strong preference for palmitoylated G-alpha proteins over other acyl substrates. Mediates the deacylation of G-alpha proteins such as GPA1 in vivo, but has weak or no activity toward palmitoylated Ras proteins. Has weak lysophospholipase activity in vitro; however such activity may not exist in vivo. This Neurospora crassa (strain ATCC 24698 / 74-OR23-1A / CBS 708.71 / DSM 1257 / FGSC 987) protein is Acyl-protein thioesterase 1.